The following is a 442-amino-acid chain: Xaa-Pro dipeptidase (442 aa).

Residues Asp-245, Asp-256, His-338, Glu-383, and Glu-422 each contribute to the Mn(2+) site.

It belongs to the peptidase M24B family. Bacterial-type prolidase subfamily. Mn(2+) is required as a cofactor.

The enzyme catalyses Xaa-L-Pro dipeptide + H2O = an L-alpha-amino acid + L-proline. Splits dipeptides with a prolyl residue in the C-terminal position. In Sodalis glossinidius (strain morsitans), this protein is Xaa-Pro dipeptidase.